The following is a 428-amino-acid chain: Palmitoyltransferase pfa4 (428 aa).

The Cytoplasmic portion of the chain corresponds to 1–10; sequence MLCRSFNISQ. A helical membrane pass occupies residues 11-31; it reads LAIPFVSVLISFLAYTSQLFF. The Lumenal segment spans residues 32–43; it reads YYFEEAPLRSEE. A helical membrane pass occupies residues 44–61; that stretch reads FWRLNIFAVCIWVCYYRA. Residues 62–134 are Cytoplasmic-facing; it reads CTVDPGRIPK…SNCVSHFTYP (73 aa). Positions 91-141 constitute a DHHC domain; that stretch reads RWCRRCEAFKPPRAHHCKTCQRCIPKMDHHCPWTSNCVSHFTYPHFMRFLF. Catalysis depends on Cys-121, which acts as the S-palmitoyl cysteine intermediate. The chain crosses the membrane as a helical span at residues 135 to 155; the sequence is HFMRFLFYAVVGMGYLETLLF. Topologically, residues 156–177 are lumenal; that stretch reads ERASIVWASRHLPSYLGPGLGQ. A helical transmembrane segment spans residues 178-198; it reads LVHLFILLVVNSLTWLALFIL. At 199–428 the chain is on the cytoplasmic side; sequence LLRSIWSLAL…GILMQRRRQQ (230 aa). The disordered stretch occupies residues 339 to 400; sequence QRSNDASHSG…WKNSEGDRLR (62 aa). The segment covering 360–373 has biased composition (basic and acidic residues); that stretch reads DRFNENKAKERLSE. Residues 374-388 are compositionally biased toward acidic residues; sequence SESDFSDDEEVQDGE. Basic and acidic residues predominate over residues 389-400; that stretch reads EGWKNSEGDRLR.

It belongs to the DHHC palmitoyltransferase family. PFA4 subfamily.

The protein localises to the endoplasmic reticulum membrane. It catalyses the reaction L-cysteinyl-[protein] + hexadecanoyl-CoA = S-hexadecanoyl-L-cysteinyl-[protein] + CoA. Its function is as follows. Mediates the reversible addition of palmitate to target proteins, thereby regulating their membrane association and biological function. The polypeptide is Palmitoyltransferase pfa4 (Aspergillus fumigatus (strain ATCC MYA-4609 / CBS 101355 / FGSC A1100 / Af293) (Neosartorya fumigata)).